A 128-amino-acid chain; its full sequence is Phosphoribosyl-AMP cyclohydrolase (128 aa).

Aspartate 79 is a Mg(2+) binding site. Cysteine 80 is a binding site for Zn(2+). 2 residues coordinate Mg(2+): aspartate 81 and aspartate 83. Zn(2+) contacts are provided by cysteine 97 and cysteine 104.

Belongs to the PRA-CH family. In terms of assembly, homodimer. Mg(2+) serves as cofactor. It depends on Zn(2+) as a cofactor.

Its subcellular location is the cytoplasm. It catalyses the reaction 1-(5-phospho-beta-D-ribosyl)-5'-AMP + H2O = 1-(5-phospho-beta-D-ribosyl)-5-[(5-phospho-beta-D-ribosylamino)methylideneamino]imidazole-4-carboxamide. The protein operates within amino-acid biosynthesis; L-histidine biosynthesis; L-histidine from 5-phospho-alpha-D-ribose 1-diphosphate: step 3/9. Functionally, catalyzes the hydrolysis of the adenine ring of phosphoribosyl-AMP. The sequence is that of Phosphoribosyl-AMP cyclohydrolase from Saccharophagus degradans (strain 2-40 / ATCC 43961 / DSM 17024).